The chain runs to 183 residues: Ribosome maturation factor RimM (183 aa).

In terms of domain architecture, PRC barrel spans 104–183 (EGDYYWKDLM…TIEVDWDPGF (80 aa)).

Belongs to the RimM family. As to quaternary structure, binds ribosomal protein uS19.

Its subcellular location is the cytoplasm. In terms of biological role, an accessory protein needed during the final step in the assembly of 30S ribosomal subunit, possibly for assembly of the head region. Essential for efficient processing of 16S rRNA. May be needed both before and after RbfA during the maturation of 16S rRNA. It has affinity for free ribosomal 30S subunits but not for 70S ribosomes. This is Ribosome maturation factor RimM from Salmonella choleraesuis (strain SC-B67).